Here is a 277-residue protein sequence, read N- to C-terminus: tRNA U34 carboxymethyltransferase (277 aa).

Carboxy-S-adenosyl-L-methionine contacts are provided by residues Lys-46, Trp-60, Lys-65, Gly-84, Asp-106–Ser-108, Val-133–Glu-134, Tyr-153, and Arg-268.

The protein belongs to the class I-like SAM-binding methyltransferase superfamily. CmoB family. Homotetramer.

The catalysed reaction is carboxy-S-adenosyl-L-methionine + 5-hydroxyuridine(34) in tRNA = 5-carboxymethoxyuridine(34) in tRNA + S-adenosyl-L-homocysteine + H(+). Its function is as follows. Catalyzes carboxymethyl transfer from carboxy-S-adenosyl-L-methionine (Cx-SAM) to 5-hydroxyuridine (ho5U) to form 5-carboxymethoxyuridine (cmo5U) at position 34 in tRNAs. This is tRNA U34 carboxymethyltransferase from Wolinella succinogenes (strain ATCC 29543 / DSM 1740 / CCUG 13145 / JCM 31913 / LMG 7466 / NCTC 11488 / FDC 602W) (Vibrio succinogenes).